A 467-amino-acid chain; its full sequence is MAKRVAEKELTDRNWDEEDEVEEMGTFSVASEEVMKNRAVKKAKRRNIGFESDSGGAFKGFKGLVVPSGGGGFSGFGGGSGGKPLEGLTNGNSTDSATPFSSAKTAAEPKAAFGSFAVNGPTTLVDKKISSPKCNSSNQPPSSGPASSTSCTGNTYHKQLAGLNCSVRDWIVKHVNTNPLCDLTPIFKDYERYLATIEKQLENGGSSSSERQTDRATAAMEPPSLFGSTKLQQDSPFSFHGNKAEDTSEKLEFTAEKKSDAAQGATSASFNFGKKIESSVLGSLSSGSLTGFSFSPGNSSLFGKDAAQSKAASSPFSAKASESQAGGSSSECRDGEEEESDEPPKVVVTEVKEEDAFYSKKCKLFYKKDNEFKEKGVGTLHLKPTATQKTQLLVRADTNLGNILLNVLIPPNMPCTRTGKNNVLIVCVPNPPLDEKQPTLPVTMLIRVKTSEDADELHKILLQKKDV.

Basic and acidic residues predominate over residues 1–14 (MAKRVAEKELTDRN). Residues 1–20 (MAKRVAEKELTDRNWDEEDE) are disordered. N6-acetyllysine is present on lysine 8. Serine 52 bears the Phosphoserine mark. Residues 76–77 (FG) form repeat 1. Positions 76 to 303 (FGGGSGGKPL…FSPGNSSLFG (228 aa)) are 5 X 2 AA repeats of F-G. Lysine 83 carries the post-translational modification N6-acetyllysine. Residues 84–103 (PLEGLTNGNSTDSATPFSSA) form a disordered region. Residues 89–103 (TNGNSTDSATPFSSA) are compositionally biased toward polar residues. The stretch at 113-114 (FG) is repeat 2. The residue at position 127 (lysine 127) is an N6-acetyllysine. 2 disordered regions span residues 129–151 (ISSP…STSC) and 201–248 (LENG…EDTS). Residues 132–151 (PKCNSSNQPPSSGPASSTSC) show a composition bias toward polar residues. The segment at 144 to 206 (GPASSTSCTG…IEKQLENGGS (63 aa)) is binding to CDKN1B. Phosphoserine is present on serine 209. Repeat unit 3 spans residues 226-227 (FG). Positions 226–236 (FGSTKLQQDSP) are enriched in polar residues. Serine 235 is modified (phosphoserine). Threonine 247 is subject to Phosphothreonine. The residue at position 269 (serine 269) is a Phosphoserine. Repeat unit 4 spans residues 272–273 (FG). Serine 295 bears the Phosphoserine mark. The stretch at 302–303 (FG) is repeat 5. The segment covering 313 to 330 (SSPFSAKASESQAGGSSS) has biased composition (low complexity). The disordered stretch occupies residues 313 to 348 (SSPFSAKASESQAGGSSSECRDGEEEESDEPPKVVV). The RanBD1 domain occupies 334–467 (DGEEEESDEP…HKILLQKKDV (134 aa)). Lysine 352 participates in a covalent cross-link: Glycyl lysine isopeptide (Lys-Gly) (interchain with G-Cter in SUMO2). N6-acetyllysine is present on lysine 449.

Does not interact with TPR. Interacts with Importin alpha-2, Importin beta, Importin beta-2, NUP153, Ran binding protein 7, CDKN1B and itself. In terms of tissue distribution, highly expressed in testis, intermediate levels in kidney, liver, spleen and low basal levels in somatic cells. Expression in testis undergoes changes and subcellular localization during germ cell differentiation.

It localises to the nucleus. It is found in the nuclear pore complex. The protein resides in the nucleus membrane. In terms of biological role, component of the nuclear pore complex that has a direct role in nuclear protein import. Actively displaces NLSs from importin-alpha, and facilitates disassembly of the importin-alpha:beta-cargo complex and importin recycling. Interacts with regulatory proteins of cell cycle progression including CDKN1B. This interaction is required for correct intracellular transport and degradation of CDKN1B. This is Nuclear pore complex protein Nup50 (Nup50) from Rattus norvegicus (Rat).